A 493-amino-acid polypeptide reads, in one-letter code: Tripartite motif-containing protein 5 (493 aa).

A2 carries the post-translational modification N-acetylalanine. The segment at 15–59 (CPICLELLTQPLSLDCGHSFCQACLTANHKKSTLDKGERSCPVCR) adopts an RING-type zinc-finger fold. S86 is modified (phosphoserine). The segment at 90–132 (QKVDHCARHGEKLLLFCKEDGKVICWLCERSQEHRGHHTFLTE) adopts a B box-type zinc-finger fold. Positions 95, 98, 117, and 123 each coordinate Zn(2+). Residues 131-223 (TEEVAQKYQV…LTKSETEMVQ (93 aa)) are a coiled coil. A required for interaction with GABARAP and for autophagy region spans residues 185 to 198 (FEQLRDILDWEESN). One can recognise a B30.2/SPRY domain in the interval 281-493 (LKGMLEVFRE…VPMTLCSPSS (213 aa)).

It belongs to the TRIM/RBCC family. Can form homodimers and homotrimers. In addition to lower-order dimerization, also exhibits a higher-order multimerization and both low- and high-order multimerizations are essential for its restriction activity. Interacts with BTBD1 and BTBD2. Interacts with PSMC4, PSMC5, PSMD7 and HSPA8/HSC70. Interacts (via B30.2/SPRY domain) with HSPA1A/B. Interacts with PSMC2, MAP3K7/TAK1, TAB2 and TAB3. Interacts with SQSTM1. Interacts with TRIM6 and TRIM34. Interacts with ULK1 (phosphorylated form), GABARAP, GABARAPL1, GABARAPL2, MAP1LC3A, MAP1LC3C and BECN1. Degraded in a proteasome-independent fashion in the absence of viral infection but in a proteasome-dependent fashion following exposure to restriction sensitive virus. In terms of processing, autoubiquitinated in a RING finger- and UBE2D2-dependent manner. Monoubiquitinated by TRIM21. Deubiquitinated by Yersinia YopJ. Ubiquitination may not lead to proteasomal degradation.

Its subcellular location is the cytoplasm. It localises to the nucleus. It carries out the reaction S-ubiquitinyl-[E2 ubiquitin-conjugating enzyme]-L-cysteine + [acceptor protein]-L-lysine = [E2 ubiquitin-conjugating enzyme]-L-cysteine + N(6)-ubiquitinyl-[acceptor protein]-L-lysine.. Its pathway is protein modification; protein ubiquitination. Its function is as follows. Capsid-specific restriction factor that prevents infection from non-host-adapted retroviruses. Blocks viral replication early in the life cycle, after viral entry but before reverse transcription. In addition to acting as a capsid-specific restriction factor, also acts as a pattern recognition receptor that activates innate immune signaling in response to the retroviral capsid lattice. Binding to the viral capsid triggers its E3 ubiquitin ligase activity, and in concert with the heterodimeric ubiquitin conjugating enzyme complex UBE2V1-UBE2N (also known as UBC13-UEV1A complex) generates 'Lys-63'-linked polyubiquitin chains, which in turn are catalysts in the autophosphorylation of the MAP3K7/TAK1 complex (includes TAK1, TAB2, and TAB3). Activation of the MAP3K7/TAK1 complex by autophosphorylation results in the induction and expression of NF-kappa-B and MAPK-responsive inflammatory genes, thereby leading to an innate immune response in the infected cell. Plays a role in regulating autophagy through activation of autophagy regulator BECN1 by causing its dissociation from its inhibitors BCL2 and TAB2. The polypeptide is Tripartite motif-containing protein 5 (TRIM5) (Pongo abelii (Sumatran orangutan)).